The primary structure comprises 31 residues: Photosystem II reaction center protein T (31 aa).

The chain crosses the membrane as a helical span at residues alanine 3–phenylalanine 23.

Belongs to the PsbT family. As to quaternary structure, PSII is composed of 1 copy each of membrane proteins PsbA, PsbB, PsbC, PsbD, PsbE, PsbF, PsbH, PsbI, PsbJ, PsbK, PsbL, PsbM, PsbT, PsbX, PsbY, Psb30/Ycf12, peripheral proteins PsbO, CyanoQ (PsbQ), PsbU, PsbV and a large number of cofactors. It forms dimeric complexes.

Its subcellular location is the cellular thylakoid membrane. Its function is as follows. Found at the monomer-monomer interface of the photosystem II (PS II) dimer, plays a role in assembly and dimerization of PSII. PSII is a light-driven water plastoquinone oxidoreductase, using light energy to abstract electrons from H(2)O, generating a proton gradient subsequently used for ATP formation. This is Photosystem II reaction center protein T from Prochlorococcus marinus (strain NATL2A).